We begin with the raw amino-acid sequence, 585 residues long: Glycerol-3-phosphate acyltransferase 1 (585 aa).

Transmembrane regions (helical) follow at residues 126–146, 334–354, and 356–376; these read FFPYFMLVAFEGGSIIRAILL, TPLATLAMFIWLPIGFLLAVF, and ISVGVFLPYHVANFLASMSGV. An HXXXXD motif motif is present at residues 403–408; it reads HRTLLD.

Belongs to the GPAT/DAPAT family. In terms of tissue distribution, highly expressed in developing siliques and flower buds. Weakly or not expressed in roots, seedlings and leaves.

The protein resides in the membrane. It localises to the mitochondrion. It catalyses the reaction sn-glycerol 3-phosphate + an acyl-CoA = a 1-acyl-sn-glycero-3-phosphate + CoA. The protein operates within phospholipid metabolism; CDP-diacylglycerol biosynthesis; CDP-diacylglycerol from sn-glycerol 3-phosphate: step 1/3. Esterifies acyl-group from acyl-ACP to the sn-1 position of glycerol-3-phosphate, an essential step in glycerolipid biosynthesis. Involved in pollen development, by being required for tapetum differentiation and male fertility. In addition to the sporophytic effect, it also exerts a gametophytic effect on pollen performance. The chain is Glycerol-3-phosphate acyltransferase 1 (GPAT1) from Arabidopsis thaliana (Mouse-ear cress).